Reading from the N-terminus, the 440-residue chain is WAS/WASL-interacting protein family member 2 (440 aa).

Over residues 1-18 the composition is skewed to pro residues; that stretch reads MPIPPPPPPPPGPPPPPT. The interval 1 to 36 is disordered; that stretch reads MPIPPPPPPPPGPPPPPTFHQANTEQPKLSRDEQRG. The WH2 domain occupies 36–53; that stretch reads GRGALLQDICKGTKLKKV. At R37 the chain carries Asymmetric dimethylarginine. Residues 49 to 52 are binds actin; the sequence is KLKK. Disordered stretches follow at residues 56-387 and 419-440; these read INDR…DSIT and RIYPSKTNRAARGAPPLPPILR. Residues 116-133 are compositionally biased toward low complexity; sequence PSSRAAAPRPPVSAASGR. The span at 161-172 shows a compositional bias: polar residues; the sequence is RPNTTSSTGMKH. Pro residues-rich tracts occupy residues 176–193, 222–236, 249–262, and 356–378; these read APPPPPPGRRANAPPTPL, EGPPAPPPVKPPPSP, APPPPPYRQPPGVP, and RGKPPPPPSRTPAGPPPPPPPPL.

This sequence belongs to the verprolin family. As to quaternary structure, interacts with WASL and WASP, and this interaction results in cytoplasmic relocation of these two proteins along actin filaments. Interacts with NCK2 resulting in the localization to sites of focal adhesions. No interaction was seen with WASF2 and WASF3. Expressed mainly in brain, colon, lung and stomach (at protein level). Ubiquitously expressed, with high expression in brain, kidney, lung, and placenta.

Its subcellular location is the cytoplasm. It localises to the cytoskeleton. Its function is as follows. Plays an active role in the formation of cell surface protrusions downstream of activated PDGFB receptors. Plays an important role in actin-microspike formation through cooperation with WASL. May cooperate with WASP and WASL to induce mobilization and reorganization of the actin filament system. In Homo sapiens (Human), this protein is WAS/WASL-interacting protein family member 2 (WIPF2).